Consider the following 584-residue polypeptide: Protein BONZAI 3 (584 aa).

Residues M1–P23 form a disordered region. The N-myristoyl glycine moiety is linked to residue G2. 2 C2 domains span residues H34–L167 and N178–Y305. The Ca(2+) site is built by D67, D73, D126, D128, and D145. One can recognise a VWFA domain in the interval N344 to L563.

The protein belongs to the copine family. As to quaternary structure, interacts with BAP1 and BAP2. Ca(2+) serves as cofactor. Expressed at an extremely low level.

The protein localises to the cell membrane. Negative regulator of cell death and defense responses. Repress a number of R genes and may have effects in promoting growth and development. May function in membrane trafficking and in fusion of vesicles with plasma membrane. The chain is Protein BONZAI 3 (BON3) from Arabidopsis thaliana (Mouse-ear cress).